A 229-amino-acid chain; its full sequence is Heptaprenylglyceryl phosphate synthase (229 aa).

Residues Asp13 and Thr39 each coordinate Mg(2+).

Belongs to the GGGP/HepGP synthase family. As to quaternary structure, homodimer. The cofactor is Mg(2+).

It catalyses the reaction sn-glycerol 1-phosphate + all-trans-heptaprenyl diphosphate = 3-heptaprenyl-sn-glycero-1-phosphate + diphosphate. It functions in the pathway membrane lipid metabolism; glycerophospholipid metabolism. Functionally, prenyltransferase that catalyzes in vivo the transfer of the heptaprenyl moiety of heptaprenyl pyrophosphate (HepPP; 35 carbon atoms) to the C3 hydroxyl of sn-glycerol-1-phosphate (G1P), producing heptaprenylglyceryl phosphate (HepGP). This reaction is an ether-bond-formation step in the biosynthesis of archaea-type G1P-based membrane lipids found in Bacillales. This Lysinibacillus sphaericus (strain C3-41) protein is Heptaprenylglyceryl phosphate synthase.